A 773-amino-acid chain; its full sequence is MFSLSSTVQPQVTVPLSHLINAFHTPKNTSVSLSGVSVSQNQHRDVVPEHEAPSSECMFSDFLTKLNIVSIGKGKIFEGYRSMFMEPAKRMKKSLDTTDNWHIRPEPFSLSIPPSLNLRDLGLSELKIGQIDQLVENLLPGFCKGKNISSHWHTSHVSAQSFFENKYGNLDIFSTLRSSCLYRHHSRALQSICSDLQYWPVFIQSRGFKTLKSRTRRLQSTSERLAETQNIAPSFVKGFLLRDRGSDVESLDKLMKTKNIPEAHQDAFKTGFAEGFLKAQALTQKTNDSLRRTRLILFVLLLFGIYGLLKNPFLSVRFRTTTGLDSAVDPVQMKNVTFEHVKGVEEAKQELQEVVEFLKNPQKFTILGGKLPKGILLVGPPGTGKTLLARAVAGEADVPFYYASGSEFDEMFVGVGASRIRNLFREAKANAPCVIFIDELDSVGGKRIESPMHPYSRQTINQLLAEMDGFKPNEGVIIIGATNFPEALDNALIRPGRFDMQVTVPRPDVKGRTEILKWYLNKIKFDQSVDPEIIARGTVGFSGAELENLVNQAALKAAVDGKEMVTMKELEFSKDKILMGPERRSVEIDNKNKTITAYHESGHAIIAYYTKDAMPINKATIMPRGPTLGHVSLLPENDRWNETRAQLLAQMDVSMGGRVAEELIFGTDHITTGASSDFDNATKIAKRMVTKFGMSEKLGVMTYSDTGKLSPETQSAIEQEIRILLRDSYERAKHILKTHAKEHKNLAEALLTYETLDAKEIQIVLEGKKLEVR.

The Mitochondrial matrix segment spans residues 1-295 (MFSLSSTVQP…TNDSLRRTRL (295 aa)). A helical membrane pass occupies residues 296–316 (ILFVLLLFGIYGLLKNPFLSV). The Mitochondrial intermembrane segment spans residues 317 to 773 (RFRTTTGLDS…VLEGKKLEVR (457 aa)). 6 residues coordinate ATP: Val-341, Thr-383, Gly-384, Lys-385, Thr-386, and Leu-387. His-599 lines the Zn(2+) pocket. The active site involves Glu-600. Residues His-603 and Asp-677 each coordinate Zn(2+).

This sequence in the N-terminal section; belongs to the AAA ATPase family. It in the C-terminal section; belongs to the peptidase M41 family. In terms of assembly, homohexamer; may also form heterohexamers. Exists in several complexes of 600-1100 kDa. Interacts with AFG1L. Requires Zn(2+) as cofactor. Proteolytically processed by mitochondrial processing peptidase (MPP) to generate the mature form. Degraded in an OMA1-dependent manner in response to oxidative stress. In terms of tissue distribution, high expression in cardiac and skeletal muscle mitochondria.

Its subcellular location is the mitochondrion inner membrane. The protein resides in the mitochondrion. It catalyses the reaction ATP + H2O = ADP + phosphate + H(+). Its function is as follows. ATP-dependent metalloprotease that catalyzes the degradation of folded and unfolded proteins with a suitable degron sequence in the mitochondrial intermembrane region. Plays an important role in regulating mitochondrial morphology and function by cleaving OPA1 at position S2, giving rise to a form of OPA1 that promotes maintenance of normal mitochondrial structure and mitochondrial protein metabolism. Ensures cell proliferation, maintains normal cristae morphology and complex I respiration activity, promotes antiapoptotic activity and protects mitochondria from the accumulation of oxidatively damaged membrane proteins. Required to control the accumulation of nonassembled respiratory chain subunits (NDUFB6, OX4 and ND1). Involved in the mitochondrial adaptation in response to various signals, such as stress or developmental cues, by mediating degradation of mitochondrial proteins to rewire the mitochondrial proteome. Catalyzes degradation of mitochondrial proteins, such as translocases, lipid transfer proteins and metabolic enzymes in response to nutrient starvation in order to limit mitochondrial biogenesis: mechanistically, YME1L is activated by decreased phosphatidylethanolamine levels caused by LPIN1 activity in response to mTORC1 inhibition. Acts as a regulator of adult neural stem cell self-renewal by promoting mitochondrial proteome rewiring, preserving neural stem and progenitor cells self-renewal. Required for normal, constitutive degradation of PRELID1. Catalyzes the degradation of OMA1 in response to membrane depolarization. Mediates degradation of TIMM17A downstream of the integrated stress response (ISR). Catalyzes degradation of MICU1 when MICU1 is not assembled via an interchain disulfide. The chain is ATP-dependent zinc metalloprotease YME1L1 (YME1L1) from Homo sapiens (Human).